The primary structure comprises 474 residues: Alginate biosynthesis protein AlgX (474 aa).

Residues 1–26 (MKTRTSRLFRLSALAAGLCLAQAALA) form the signal peptide. The interval 27–347 (ADPGAAPSYQ…QAMPLVDNGC (321 aa)) is SGNH hydrolase-like domain. Cys-44 and Cys-229 are joined by a disulfide. Residue Asp-174 is part of the active site. The active-site Proton acceptor is the His-176. Ser-269 acts as the Nucleophile in catalysis. A disulfide bond links Cys-347 and Cys-460. A CBM domain region spans residues 348-474 (SGRKTVLSRK…AKASQSVAGR (127 aa)).

Belongs to the AlgX family. In terms of assembly, monomer. Interacts with AlgK and MucD.

Its subcellular location is the periplasm. The protein operates within glycan biosynthesis; alginate biosynthesis. Its function is as follows. Plays two roles in the biosynthesis of the exopolysaccharide alginate: protects alginate from degradation as the polymer traverses the periplasm, and also plays a role in its O-acetylation. Acetylation of alginate causes the cells in the biofilm to adhere better to lung epithelium, form microcolonies, and resist the effects of the host immune system and/or antibiotics. Displays a low acetylesterase activity in vitro using a pseudosubstrate, 3-carboxyumbelliferyl acetate. Probably has acetyltransferase activity in vivo. The protein is Alginate biosynthesis protein AlgX (algX) of Pseudomonas aeruginosa (strain ATCC 15692 / DSM 22644 / CIP 104116 / JCM 14847 / LMG 12228 / 1C / PRS 101 / PAO1).